We begin with the raw amino-acid sequence, 86 residues long: Cyclin-dependent kinase inhibitor 6 (86 aa).

Low complexity predominate over residues 1-15 (MAAAAATVTAVQPAA). Residues 1 to 23 (MAAAAATVTAVQPAASSCGKRDG) form a disordered region.

It belongs to the CDI family. ICK/KRP subfamily.

The chain is Cyclin-dependent kinase inhibitor 6 (KRP6) from Oryza sativa subsp. japonica (Rice).